Reading from the N-terminus, the 92-residue chain is Small ribosomal subunit protein uS19c (92 aa).

It belongs to the universal ribosomal protein uS19 family.

The protein resides in the plastid. It localises to the chloroplast. Its function is as follows. Protein S19 forms a complex with S13 that binds strongly to the 16S ribosomal RNA. This chain is Small ribosomal subunit protein uS19c, found in Guizotia abyssinica (Niger).